Consider the following 377-residue polypeptide: 5-hydroxytryptamine receptor 1D (377 aa).

A disordered region spans residues methionine 1–threonine 23. Residues methionine 1–lysine 38 lie on the Extracellular side of the membrane. Residues asparagine 5, asparagine 17, and asparagine 21 are each glycosylated (N-linked (GlcNAc...) asparagine). Residues isoleucine 39–leucine 64 traverse the membrane as a helical segment. At leucine 65–tyrosine 75 the chain is on the cytoplasmic side. Residues leucine 76–alanine 97 form a helical membrane-spanning segment. Residues tyrosine 98–isoleucine 109 are Extracellular-facing. The chain crosses the membrane as a helical span at residues leucine 110 to leucine 134. A disulfide bridge links cysteine 111 with cysteine 188. The serotonin site is built by aspartate 118 and cysteine 122. Positions aspartate 135–tyrosine 137 match the DRY motif; important for ligand-induced conformation changes motif. Over aspartate 135–histidine 154 the chain is Cytoplasmic. Residues alanine 155 to tryptophan 176 traverse the membrane as a helical segment. The Extracellular segment spans residues arginine 177–glutamine 194. The helical transmembrane segment at isoleucine 195–glycine 218 threads the bilayer. Over arginine 219–threonine 300 the chain is Cytoplasmic. The helical transmembrane segment at lysine 301–isoleucine 326 threads the bilayer. Serine 321 is a binding site for serotonin. At cysteine 327–proline 335 the chain is on the extracellular side. The helical transmembrane segment at alanine 336–phenylalanine 359 threads the bilayer. Residues asparagine 352 to tyrosine 356 carry the NPxxY motif; important for ligand-induced conformation changes and signaling motif. The Cytoplasmic portion of the chain corresponds to asparagine 360–serine 377.

The protein belongs to the G-protein coupled receptor 1 family. In terms of assembly, homodimer. Heterodimer with HTR1B. Detected in brain neocortex and caudate nucleus (at protein level).

The protein resides in the cell membrane. Its function is as follows. G-protein coupled receptor for 5-hydroxytryptamine (serotonin). Also functions as a receptor for ergot alkaloid derivatives, various anxiolytic and antidepressant drugs and other psychoactive substances. Ligand binding causes a conformation change that triggers signaling via guanine nucleotide-binding proteins (G proteins) and modulates the activity of downstream effectors, such as adenylate cyclase. HTR1D is coupled to G(i)/G(o) G alpha proteins and mediates inhibitory neurotransmission by inhibiting adenylate cyclase activity. Regulates the release of 5-hydroxytryptamine in the brain, and thereby affects neural activity. May also play a role in regulating the release of other neurotransmitters. May play a role in vasoconstriction. The chain is 5-hydroxytryptamine receptor 1D from Homo sapiens (Human).